The primary structure comprises 296 residues: Cytidine deaminase (296 aa).

CMP/dCMP-type deaminase domains are found at residues 47-167 and 186-296; these read DSHE…FGPA and ESDD…VDPV. 88-90 serves as a coordination point for substrate; it reads NLE. His-101 contributes to the Zn(2+) binding site. Residue Glu-103 is the Proton donor of the active site. Zn(2+)-binding residues include Cys-128 and Cys-131.

Belongs to the cytidine and deoxycytidylate deaminase family. As to quaternary structure, homodimer. Zn(2+) is required as a cofactor.

It carries out the reaction cytidine + H2O + H(+) = uridine + NH4(+). It catalyses the reaction 2'-deoxycytidine + H2O + H(+) = 2'-deoxyuridine + NH4(+). Functionally, this enzyme scavenges exogenous and endogenous cytidine and 2'-deoxycytidine for UMP synthesis. In Shewanella amazonensis (strain ATCC BAA-1098 / SB2B), this protein is Cytidine deaminase.